We begin with the raw amino-acid sequence, 250 residues long: Putative B3 domain-containing protein At4g03170 (250 aa).

Positions 1–12 (MANSTGKPTSST) are enriched in polar residues. Residues 1–90 (MANSTGKPTS…EKNQPKRFKK (90 aa)) form a disordered region. The segment covering 34-56 (DREEDIDDEDDIDDEVIDDEDYE) has biased composition (acidic residues). Residues 72-84 (QSREREEETEKNQ) show a composition bias toward basic and acidic residues. The segment at residues 137–245 (KKQLMSSDVD…KLCFAIHYVK (109 aa)) is a DNA-binding region (TF-B3).

It localises to the nucleus. This chain is Putative B3 domain-containing protein At4g03170, found in Arabidopsis thaliana (Mouse-ear cress).